Consider the following 39-residue polypeptide: U1-ectatotoxin-Et1b subunit A (39 aa).

Cysteine 14 and cysteine 35 form a disulfide bridge.

It belongs to the ectatomin family. Ectatomin-Et subfamily. In terms of assembly, heterodimer of subunits A and B; disulfide-linked. As to expression, expressed by the venom gland.

Its subcellular location is the secreted. The protein resides in the target cell membrane. This Ectatomma tuberculatum (Selva ant) protein is U1-ectatotoxin-Et1b subunit A.